Here is a 125-residue protein sequence, read N- to C-terminus: Translation initiation factor 5A (125 aa).

At lysine 35 the chain carries Hypusine.

Belongs to the eIF-5A family.

The protein localises to the cytoplasm. In terms of biological role, functions by promoting the formation of the first peptide bond. The sequence is that of Translation initiation factor 5A (eIF5A) from Methanoregula boonei (strain DSM 21154 / JCM 14090 / 6A8).